Consider the following 498-residue polypeptide: Probable cytosol aminopeptidase (498 aa).

Mn(2+) contacts are provided by lysine 267 and aspartate 272. The active site involves lysine 279. Aspartate 290, aspartate 349, and glutamate 351 together coordinate Mn(2+). The active site involves arginine 353.

The protein belongs to the peptidase M17 family. Mn(2+) serves as cofactor.

The protein localises to the cytoplasm. The enzyme catalyses Release of an N-terminal amino acid, Xaa-|-Yaa-, in which Xaa is preferably Leu, but may be other amino acids including Pro although not Arg or Lys, and Yaa may be Pro. Amino acid amides and methyl esters are also readily hydrolyzed, but rates on arylamides are exceedingly low.. It carries out the reaction Release of an N-terminal amino acid, preferentially leucine, but not glutamic or aspartic acids.. Functionally, presumably involved in the processing and regular turnover of intracellular proteins. Catalyzes the removal of unsubstituted N-terminal amino acids from various peptides. The chain is Probable cytosol aminopeptidase from Dechloromonas aromatica (strain RCB).